The sequence spans 188 residues: Ion-translocating oxidoreductase complex subunit B (188 aa).

Residues 1-26 are hydrophobic; the sequence is MMSLWIAIGALSTLALVSGVVLGFAA. The region spanning 32–91 is the 4Fe-4S domain; it reads DEDPVVEQVDAILPQSQCGQCGYPGCRPYAEAVSTGGEKINKCAPGGEQVMLKLAELLAV. Residues Cys-49, Cys-52, Cys-57, Cys-74, Cys-117, Cys-120, Cys-123, Cys-127, Cys-147, Cys-150, Cys-153, and Cys-157 each coordinate [4Fe-4S] cluster. 4Fe-4S ferredoxin-type domains are found at residues 108–137 and 138–167; these read KVAF…GATR and AMHT…MIPV.

The protein belongs to the 4Fe4S bacterial-type ferredoxin family. RnfB subfamily. The complex is composed of six subunits: RnfA, RnfB, RnfC, RnfD, RnfE and RnfG. The cofactor is [4Fe-4S] cluster.

The protein localises to the cell inner membrane. Functionally, part of a membrane-bound complex that couples electron transfer with translocation of ions across the membrane. This is Ion-translocating oxidoreductase complex subunit B from Yersinia pestis bv. Antiqua (strain Antiqua).